The chain runs to 86 residues: Large ribosomal subunit protein bL31 (86 aa).

4 residues coordinate Zn(2+): C16, C18, C38, and C41.

It belongs to the bacterial ribosomal protein bL31 family. Type A subfamily. As to quaternary structure, part of the 50S ribosomal subunit. It depends on Zn(2+) as a cofactor.

Functionally, binds the 23S rRNA. The polypeptide is Large ribosomal subunit protein bL31 (Acidothermus cellulolyticus (strain ATCC 43068 / DSM 8971 / 11B)).